The chain runs to 351 residues: Transcription factor bHLH93 (351 aa).

One can recognise a bHLH domain in the interval 174–223; that stretch reads GQPSKNLMAERRRRKRLNDRLSMLRSIVPKISKMDRTSILGDAIDYMKEL.

In terms of assembly, homodimer. Interacts with FAMA. As to expression, broadly expressed.

The protein resides in the nucleus. Its function is as follows. Transcription factor. May be involved in the differentiation of stomatal guard cells. The chain is Transcription factor bHLH93 (BHLH93) from Arabidopsis thaliana (Mouse-ear cress).